The following is a 310-amino-acid chain: MEIPHIPVLLNEVQEIFKNLKTGYFLDCTLGFGGHSEALLKNHPDLKFIACDQDQQALEFSKKRLKDFHNRITFVQSNFSEVLEKISHKEELRGILADIGVSSFQLDNNERGFSVNSDFLDMRMNQNSKISAYEIINTYTKEQLTSIFKDYGELHDAHFIAEKICLERSKNPIKSAKELYQIIGKGKQNHRKISKATLAFQAIRIEVNQELKVLKDFLEHLENLKPKNCILAIISFHSLEDRIVKQFFKKWSKNCICNEKIMRCECGNNHSLGQIITKKAISASKEELLKNSRSSCAKMRAFYFNNLDNK.

Residues 33 to 35 (GGH), Asp-52, Phe-79, Asp-98, and Gln-105 contribute to the S-adenosyl-L-methionine site.

The protein belongs to the methyltransferase superfamily. RsmH family.

It is found in the cytoplasm. It carries out the reaction cytidine(1402) in 16S rRNA + S-adenosyl-L-methionine = N(4)-methylcytidine(1402) in 16S rRNA + S-adenosyl-L-homocysteine + H(+). Its function is as follows. Specifically methylates the N4 position of cytidine in position 1402 (C1402) of 16S rRNA. In Campylobacter jejuni subsp. jejuni serotype O:23/36 (strain 81-176), this protein is Ribosomal RNA small subunit methyltransferase H.